The chain runs to 311 residues: Meiotically up-regulated gene 146 protein (311 aa).

The protein resides in the cytoplasm. It localises to the nucleus. Functionally, has a role in sporulation. The chain is Meiotically up-regulated gene 146 protein (mug146) from Schizosaccharomyces pombe (strain 972 / ATCC 24843) (Fission yeast).